A 1235-amino-acid polypeptide reads, in one-letter code: Bromodomain-containing protein 8 (1235 aa).

Lysine 85 carries the post-translational modification N6-acetyllysine. Residues 97–171 adopt a coiled-coil conformation; the sequence is VRKLTAERVE…ATDAAYQARQ (75 aa). The residue at position 124 (arginine 124) is a Phosphothreonine. A phosphoserine mark is found at leucine 128 and aspartate 144. Residues 186–205 are disordered; the sequence is RSPIDSASPGGDYPLGDLTP. Alanine 264 bears the Phosphothreonine mark. Serine 268, serine 284, serine 383, and serine 387 each carry phosphoserine. Lysine 469 is covalently cross-linked (Glycyl lysine isopeptide (Lys-Gly) (interchain with G-Cter in SUMO2)). Position 481 is an N6-acetyllysine; alternate (lysine 481). Lysine 481 participates in a covalent cross-link: Glycyl lysine isopeptide (Lys-Gly) (interchain with G-Cter in SUMO1); alternate. Lysine 481 is covalently cross-linked (Glycyl lysine isopeptide (Lys-Gly) (interchain with G-Cter in SUMO2); alternate). Glycyl lysine isopeptide (Lys-Gly) (interchain with G-Cter in SUMO2) cross-links involve residues lysine 509 and lysine 575. The segment at 551 to 597 is disordered; that stretch reads TAAGEIVEADVAIGKGDETPLTNVKTEASPESMLSPSHGSNPIEDPL. A Phosphoserine modification is found at serine 579. Residue lysine 612 forms a Glycyl lysine isopeptide (Lys-Gly) (interchain with G-Cter in SUMO2) linkage. Phosphoserine is present on residues serine 621, serine 637, and serine 641. Residues 621–672 are disordered; the sequence is SQIKDAPGEDEEEDGVSEAASLEEPKEEDQGEGYLSEMDNEPPVSESDDGFS. A Bromo 1 domain is found at 706-811; the sequence is IQAQKIWKKA…RDVLEQIQQF (106 aa). 3 disordered regions span residues 827-848, 903-940, and 966-999; these read AKSLRGRDSTRKQDASEKDSVP, ETEDPEAEELEESSPEREPSELLVGDGGSEESQEAARK, and ESSEGCCPPSGTRQEGREIKASEGERELCRETEE. Over residues 831-846 the composition is skewed to basic and acidic residues; the sequence is RGRDSTRKQDASEKDS. A compositionally biased stretch (acidic residues) spans 905–915; it reads EDPEAEELEES. Leucine 924 carries the post-translational modification Phosphoserine. Residues 979–999 are compositionally biased toward basic and acidic residues; it reads QEGREIKASEGERELCRETEE. The Bromo 2 domain maps to 1099–1207; that stretch reads DDPVQDHLLF…QEVLEQIQVL (109 aa).

As to quaternary structure, component of the NuA4 histone acetyltransferase complex which contains the catalytic subunit KAT5/TIP60 and the subunits EP400, TRRAP/PAF400, BRD8/SMAP, EPC1, DMAP1/DNMAP1, RUVBL1/TIP49, RUVBL2, ING3, actin, ACTL6A/BAF53A, MORF4L1/MRG15, MORF4L2/MRGX, MRGBP, YEATS4/GAS41, VPS72/YL1 and MEAF6. The NuA4 complex interacts with MYC and the adenovirus E1A protein. Component of a NuA4-related complex which contains EP400, TRRAP/PAF400, SRCAP, BRD8/SMAP, EPC1, DMAP1/DNMAP1, RUVBL1/TIP49, RUVBL2, actin, ACTL6A/BAF53A, VPS72 and YEATS4/GAS41. BRD8 isoform 2 interacts with RXRA/NR2B1 and THRB/ERBA2. Component of a SWR1-like complex. As to expression, expressed in adipose tissue, brain, heart, kidney, liver, lung, pancreas, placenta and skeletal muscle.

Its subcellular location is the nucleus. May act as a coactivator during transcriptional activation by hormone-activated nuclear receptors (NR). Isoform 2 stimulates transcriptional activation by AR/DHTR, ESR1/NR3A1, RXRA/NR2B1 and THRB/ERBA2. At least isoform 1 and isoform 2 are components of the NuA4 histone acetyltransferase (HAT) complex which is involved in transcriptional activation of select genes principally by acetylation of nucleosomal histones H4 and H2A. This modification may both alter nucleosome - DNA interactions and promote interaction of the modified histones with other proteins which positively regulate transcription. This complex may be required for the activation of transcriptional programs associated with oncogene and proto-oncogene mediated growth induction, tumor suppressor mediated growth arrest and replicative senescence, apoptosis, and DNA repair. NuA4 may also play a direct role in DNA repair when recruited to sites of DNA damage. Component of a SWR1-like complex that specifically mediates the removal of histone H2A.Z/H2AZ1 from the nucleosome. The sequence is that of Bromodomain-containing protein 8 (BRD8) from Homo sapiens (Human).